The sequence spans 95 residues: Hge-scorpine (95 aa).

A signal peptide spans 1 to 19 (MNTKLTVLCFLGIVTIVSC). The region spanning 55 to 94 (QFGCFANVDVKGDCKRHCKAEDKEGICHGTKCKCGVPISY) is the BetaSPN-type CS-alpha/beta domain. Disulfide bonds link C58–C81, C68–C86, and C72–C88.

This sequence belongs to the long chain scorpion toxin family. Class 3 subfamily. As to expression, expressed by the venom gland.

The protein resides in the secreted. In terms of biological role, has antibacterial activity against B.subtilis, but not against S.aureus. Also has hemolytic and cytolytic activities. Since cell lysis occurs at the tested concentrations, observation of activity on potassium channels is impossible. Functionally, blocks Kv1.1/KCNA1 (IC(50)=185 nM) potassium channels. Shows a weak hemolytic activity. This Hoffmannihadrurus gertschi (Scorpion) protein is Hge-scorpine.